The sequence spans 360 residues: UPF0496 protein At3g19250 (360 aa).

Residues 1-29 (MPHCFTFKPASPEGSLGDDHLPHPSPEGS) form a disordered region. The next 2 membrane-spanning stretches (helical) occupy residues 205–225 (HHAT…VAAS) and 229–249 (IAYH…TPYL).

It belongs to the UPF0496 family.

Its subcellular location is the membrane. The chain is UPF0496 protein At3g19250 from Arabidopsis thaliana (Mouse-ear cress).